The primary structure comprises 381 residues: Magnesium transporter MRS2-I (381 aa).

A run of 2 helical transmembrane segments spans residues 316–336 (LFLS…GIFG) and 353–373 (WVVL…VAYA). A Required for magnesium transport activity motif is present at residues 336-338 (GMN).

Belongs to the CorA metal ion transporter (MIT) (TC 1.A.35.5) family.

It is found in the membrane. In terms of biological role, magnesium transporter that may mediate the influx of magnesium. This is Magnesium transporter MRS2-I (MRS2-I) from Oryza sativa subsp. indica (Rice).